We begin with the raw amino-acid sequence, 554 residues long: Dihydroxy-acid dehydratase (554 aa).

D78 contacts Mg(2+). C119 serves as a coordination point for [2Fe-2S] cluster. 2 residues coordinate Mg(2+): D120 and K121. Residue K121 is modified to N6-carboxylysine. Residue C191 participates in [2Fe-2S] cluster binding. Mg(2+) is bound at residue E442. Catalysis depends on S468, which acts as the Proton acceptor.

The protein belongs to the IlvD/Edd family. In terms of assembly, homodimer. The cofactor is [2Fe-2S] cluster. Mg(2+) is required as a cofactor.

The enzyme catalyses (2R)-2,3-dihydroxy-3-methylbutanoate = 3-methyl-2-oxobutanoate + H2O. It carries out the reaction (2R,3R)-2,3-dihydroxy-3-methylpentanoate = (S)-3-methyl-2-oxopentanoate + H2O. Its pathway is amino-acid biosynthesis; L-isoleucine biosynthesis; L-isoleucine from 2-oxobutanoate: step 3/4. It participates in amino-acid biosynthesis; L-valine biosynthesis; L-valine from pyruvate: step 3/4. Its function is as follows. Functions in the biosynthesis of branched-chain amino acids. Catalyzes the dehydration of (2R,3R)-2,3-dihydroxy-3-methylpentanoate (2,3-dihydroxy-3-methylvalerate) into 2-oxo-3-methylpentanoate (2-oxo-3-methylvalerate) and of (2R)-2,3-dihydroxy-3-methylbutanoate (2,3-dihydroxyisovalerate) into 2-oxo-3-methylbutanoate (2-oxoisovalerate), the penultimate precursor to L-isoleucine and L-valine, respectively. This is Dihydroxy-acid dehydratase from Thermotoga sp. (strain RQ2).